The primary structure comprises 174 residues: Crossover junction endodeoxyribonuclease RuvC (174 aa).

Active-site residues include Asp-8, Glu-69, and Asp-141. Residues Asp-8, Glu-69, and Asp-141 each contribute to the Mg(2+) site.

Belongs to the RuvC family. Homodimer which binds Holliday junction (HJ) DNA. The HJ becomes 2-fold symmetrical on binding to RuvC with unstacked arms; it has a different conformation from HJ DNA in complex with RuvA. In the full resolvosome a probable DNA-RuvA(4)-RuvB(12)-RuvC(2) complex forms which resolves the HJ. Mg(2+) serves as cofactor.

Its subcellular location is the cytoplasm. It catalyses the reaction Endonucleolytic cleavage at a junction such as a reciprocal single-stranded crossover between two homologous DNA duplexes (Holliday junction).. The RuvA-RuvB-RuvC complex processes Holliday junction (HJ) DNA during genetic recombination and DNA repair. Endonuclease that resolves HJ intermediates. Cleaves cruciform DNA by making single-stranded nicks across the HJ at symmetrical positions within the homologous arms, yielding a 5'-phosphate and a 3'-hydroxyl group; requires a central core of homology in the junction. The consensus cleavage sequence is 5'-(A/T)TT(C/G)-3'. Cleavage occurs on the 3'-side of the TT dinucleotide at the point of strand exchange. HJ branch migration catalyzed by RuvA-RuvB allows RuvC to scan DNA until it finds its consensus sequence, where it cleaves and resolves the cruciform DNA. This is Crossover junction endodeoxyribonuclease RuvC from Xanthomonas campestris pv. campestris (strain 8004).